The following is a 509-amino-acid chain: Subtelomeric hrmA-associated cluster protein AFUB_078990 (509 aa).

In terms of biological role, part of the subtelomeric hrmA-associated cluster (HAC) containing genes that alter the hyphal surface (such as reduced total chitin or increased beta-glucan exposure) and perturb inter-hyphal interactions within the developing biofilms, resulting in a loss of vertically aligned polarized growing filaments. Consequently, this hypoxia-typic morphotype (called H-MORPH) with altered biofilm architecture leads to increased hypoxia fitness, increased host inflammation, rapid disease progression, and mortality in a murine model of invasive aspergillosis. The polypeptide is Subtelomeric hrmA-associated cluster protein AFUB_078990 (Aspergillus fumigatus (strain CBS 144.89 / FGSC A1163 / CEA10) (Neosartorya fumigata)).